Here is a 423-residue protein sequence, read N- to C-terminus: Adenylosuccinate synthetase (423 aa).

GTP contacts are provided by residues G12 to K18 and G40 to T42. D13 (proton acceptor) is an active-site residue. D13 and G40 together coordinate Mg(2+). IMP contacts are provided by residues D13–K16, N38–H41, T129, R143, Q221, T236, and R300. Residue H41 is the Proton donor of the active site. A296–R302 lines the substrate pocket. GTP is bound by residues R302, K328–D330, and S408–G410.

It belongs to the adenylosuccinate synthetase family. Homodimer. Requires Mg(2+) as cofactor.

It is found in the cytoplasm. The catalysed reaction is IMP + L-aspartate + GTP = N(6)-(1,2-dicarboxyethyl)-AMP + GDP + phosphate + 2 H(+). Its pathway is purine metabolism; AMP biosynthesis via de novo pathway; AMP from IMP: step 1/2. Its function is as follows. Plays an important role in the de novo pathway of purine nucleotide biosynthesis. Catalyzes the first committed step in the biosynthesis of AMP from IMP. This Parabacteroides distasonis (strain ATCC 8503 / DSM 20701 / CIP 104284 / JCM 5825 / NCTC 11152) protein is Adenylosuccinate synthetase.